The following is a 538-amino-acid chain: CWF19-like protein 1 (538 aa).

2 disordered regions span residues 259–278 (PDVT…TGKQ) and 298–324 (QGRK…PPQP).

The protein belongs to the CWF19 family.

This Pongo abelii (Sumatran orangutan) protein is CWF19-like protein 1 (CWF19L1).